Here is a 464-residue protein sequence, read N- to C-terminus: tRNA modification GTPase MnmE (464 aa).

(6S)-5-formyl-5,6,7,8-tetrahydrofolate contacts are provided by arginine 25, glutamate 87, and lysine 130. One can recognise a TrmE-type G domain in the interval 226-386 (GLSVVLAGQP…LRAELLRIAG (161 aa)). Asparagine 236 is a binding site for K(+). GTP is bound by residues 236 to 241 (NVGKSS), 255 to 261 (TPIAGTT), and 280 to 283 (DTAG). Serine 240 is a Mg(2+) binding site. K(+) is bound by residues threonine 255, isoleucine 257, and threonine 260. Threonine 261 is a Mg(2+) binding site. Residue lysine 464 coordinates (6S)-5-formyl-5,6,7,8-tetrahydrofolate.

It belongs to the TRAFAC class TrmE-Era-EngA-EngB-Septin-like GTPase superfamily. TrmE GTPase family. Homodimer. Heterotetramer of two MnmE and two MnmG subunits. K(+) serves as cofactor.

It is found in the cytoplasm. In terms of biological role, exhibits a very high intrinsic GTPase hydrolysis rate. Involved in the addition of a carboxymethylaminomethyl (cmnm) group at the wobble position (U34) of certain tRNAs, forming tRNA-cmnm(5)s(2)U34. In Burkholderia lata (strain ATCC 17760 / DSM 23089 / LMG 22485 / NCIMB 9086 / R18194 / 383), this protein is tRNA modification GTPase MnmE.